Reading from the N-terminus, the 243-residue chain is Putative glycerophosphodiester phosphodiesterase YhdW (243 aa).

The GP-PDE domain occupies 1–238 (MYIIAHRGAS…DYPDFIIKDG (238 aa)). His-6 acts as the Proton acceptor in catalysis. 2 residues coordinate Ca(2+): Glu-33 and Asp-35. His-48 functions as the Proton donor in the catalytic mechanism. Ca(2+) is bound at residue Glu-107.

It belongs to the glycerophosphoryl diester phosphodiesterase family. It depends on Ca(2+) as a cofactor.

It catalyses the reaction a sn-glycero-3-phosphodiester + H2O = an alcohol + sn-glycerol 3-phosphate + H(+). Glycerophosphodiester phosphodiesterase hydrolyzes glycerophosphodiesters into glycerol-3-phosphate (G3P) and the corresponding alcohol. In Bacillus subtilis (strain 168), this protein is Putative glycerophosphodiester phosphodiesterase YhdW (yhdW).